Reading from the N-terminus, the 375-residue chain is Deoxyribonuclease-2 (375 aa).

Residues 1–21 (MGLSPAAVLIFLLLGVSQTYA) form the signal peptide. N-linked (GlcNAc...) asparagine glycosylation occurs at N131.

Belongs to the DNase II family.

It carries out the reaction Endonucleolytic cleavage to nucleoside 3'-phosphates and 3'-phosphooligonucleotide end-products.. Hydrolyzes DNA under acidic conditions with a preference for double-stranded DNA. Implicated in apoptosis. The protein is Deoxyribonuclease-2 (nuc-1) of Caenorhabditis elegans.